The following is a 152-amino-acid chain: Deoxyuridine 5'-triphosphate nucleotidohydrolase (152 aa).

Substrate-binding positions include 71 to 73, N84, 88 to 90, and M98; these read RSG and LID.

This sequence belongs to the dUTPase family. Requires Mg(2+) as cofactor.

The catalysed reaction is dUTP + H2O = dUMP + diphosphate + H(+). It functions in the pathway pyrimidine metabolism; dUMP biosynthesis; dUMP from dCTP (dUTP route): step 2/2. Its function is as follows. This enzyme is involved in nucleotide metabolism: it produces dUMP, the immediate precursor of thymidine nucleotides and it decreases the intracellular concentration of dUTP so that uracil cannot be incorporated into DNA. This is Deoxyuridine 5'-triphosphate nucleotidohydrolase from Aeromonas hydrophila subsp. hydrophila (strain ATCC 7966 / DSM 30187 / BCRC 13018 / CCUG 14551 / JCM 1027 / KCTC 2358 / NCIMB 9240 / NCTC 8049).